A 418-amino-acid chain; its full sequence is Endoglucanase EG-II (418 aa).

The first 21 residues, 1–21, serve as a signal peptide directing secretion; the sequence is MNKSVAPLLLAASILYGGAAA. Residue glutamine 22 is modified to Pyrrolidone carboxylic acid. A CBM1 domain is found at 22 to 57; sequence QQTVWGQCGGIGWSGPTNCAPGSACSTLNPYYAQCI. The segment at 58 to 91 is linker; sequence PGATTITTSTRPPSGPTTTTRATSTSSSTPPTSS. The interval 63-91 is disordered; that stretch reads ITTSTRPPSGPTTTTRATSTSSSTPPTSS. Residues 92–418 form a catalytic region; it reads GVRFAGVNIA…SLVSSCLARK (327 aa). An intrachain disulfide couples cysteine 107 to cysteine 113. The N-linked (GlcNAc) asparagine glycan is linked to asparagine 124. A disulfide bond links cysteine 183 and cysteine 190. The Proton donor/acceptor role is filled by glutamate 239. Intrachain disulfides connect cysteine 323/cysteine 359 and cysteine 364/cysteine 414. Glutamate 350 functions as the Nucleophile in the catalytic mechanism.

Belongs to the glycosyl hydrolase 5 (cellulase A) family.

It localises to the secreted. The catalysed reaction is Endohydrolysis of (1-&gt;4)-beta-D-glucosidic linkages in cellulose, lichenin and cereal beta-D-glucans.. Its function is as follows. Endoglucanase (EG) that cleaves the internal beta-1,4-glucosidic bonds in cellulose. The degradation of cellulose involves an interplay between different cellulolytic enzymes. Hydrolysis starts with EGs, which cut internal glycosidic linkages to reduce the polymerization degree of the substrate and creates new chain ends for exocellobiohydrolases (CBHs). The CBH release the disaccharide cellobiose from the non-reducing end of the cellulose polymer chain. Finally, beta-1,4-glucosidases hydrolyze the cellobiose and other short cello-oligosaccharides into glucose units. The protein is Endoglucanase EG-II (egl2) of Hypocrea jecorina (strain ATCC 56765 / BCRC 32924 / NRRL 11460 / Rut C-30) (Trichoderma reesei).